We begin with the raw amino-acid sequence, 172 residues long: 3-hydroxydecanoyl-[acyl-carrier-protein] dehydratase (172 aa).

His71 is an active-site residue.

The protein belongs to the thioester dehydratase family. FabA subfamily. Homodimer.

It localises to the cytoplasm. It carries out the reaction a (3R)-hydroxyacyl-[ACP] = a (2E)-enoyl-[ACP] + H2O. It catalyses the reaction (3R)-hydroxydecanoyl-[ACP] = (2E)-decenoyl-[ACP] + H2O. The enzyme catalyses (2E)-decenoyl-[ACP] = (3Z)-decenoyl-[ACP]. Its pathway is lipid metabolism; fatty acid biosynthesis. In terms of biological role, necessary for the introduction of cis unsaturation into fatty acids. Catalyzes the dehydration of (3R)-3-hydroxydecanoyl-ACP to E-(2)-decenoyl-ACP and then its isomerization to Z-(3)-decenoyl-ACP. Can catalyze the dehydratase reaction for beta-hydroxyacyl-ACPs with saturated chain lengths up to 16:0, being most active on intermediate chain length. In Salmonella arizonae (strain ATCC BAA-731 / CDC346-86 / RSK2980), this protein is 3-hydroxydecanoyl-[acyl-carrier-protein] dehydratase.